The chain runs to 384 residues: MIWQEKIDAALDARRVADALRRRYPVAQGAGRWLVADDCQYLNFSSNDYLGLSHHPQIIRAWQQGADQFGVGSGGSGHVSGYSVAHQVLEEELAEWLGYSRALLFISGFAANQAVIAAMMAKEDRIVADRLSHASLLEAASLSPSPLRRFAHNDVTHLARLLASPCPGQQLVVTEGVFSMDGDSAPLEEIQQVTQQHDGWLMVDDAHGTGVIGEQGRGSCWLQKVKPELLVVTFGKGFGVSGAAVLCSNTVADYLLQFARHLIYSTSMPPAQAQALRASLAVIRSDEGDARREKLAALITRFRAGVQDLPFTLADSWSAIQPLIVGDNSRALQLAEKLRQQGCWVTAIRPPTVPAGTARLRLTLTAAHEMQDIDRLLEVLHGNG.

Arg21 serves as a coordination point for substrate. 108–109 (GF) is a binding site for pyridoxal 5'-phosphate. Residue His133 coordinates substrate. Residues Ser179, His207, and Thr233 each contribute to the pyridoxal 5'-phosphate site. At Lys236 the chain carries N6-(pyridoxal phosphate)lysine. Thr352 lines the substrate pocket.

This sequence belongs to the class-II pyridoxal-phosphate-dependent aminotransferase family. BioF subfamily. In terms of assembly, homodimer. Pyridoxal 5'-phosphate is required as a cofactor.

The catalysed reaction is 6-carboxyhexanoyl-[ACP] + L-alanine + H(+) = (8S)-8-amino-7-oxononanoate + holo-[ACP] + CO2. It functions in the pathway cofactor biosynthesis; biotin biosynthesis. Catalyzes the decarboxylative condensation of pimeloyl-[acyl-carrier protein] and L-alanine to produce 8-amino-7-oxononanoate (AON), [acyl-carrier protein], and carbon dioxide. The protein is 8-amino-7-oxononanoate synthase of Escherichia coli O6:H1 (strain CFT073 / ATCC 700928 / UPEC).